A 273-amino-acid chain; its full sequence is Peroxiredoxin-4 (273 aa).

An N-terminal signal peptide occupies residues 1-40 (METWSKLLDGTTPSRRWRKLVLLLPPLLLFLLQTEALQGL). Positions 81-239 (AKISKPAPYW…TLRLVQAFQY (159 aa)) constitute a Thioredoxin domain. Cys-126 (cysteine sulfenic acid (-SOH) intermediate) is an active-site residue.

It belongs to the peroxiredoxin family. AhpC/Prx1 subfamily. As to quaternary structure, homodimer; disulfide-linked, upon oxidation. 5 homodimers assemble to form a ring-like decamer. The enzyme can be inactivated by further oxidation of the cysteine sulfenic acid (C(P)-SOH) to sulphinic acid (C(P)-SO2H) and sulphonic acid (C(P)-SO3H) instead of its condensation to a disulfide bond.

It is found in the cytoplasm. It localises to the endoplasmic reticulum. Its subcellular location is the secreted. It carries out the reaction a hydroperoxide + [thioredoxin]-dithiol = an alcohol + [thioredoxin]-disulfide + H2O. Its function is as follows. Thiol-specific peroxidase that catalyzes the reduction of hydrogen peroxide and organic hydroperoxides to water and alcohols, respectively. Plays a role in cell protection against oxidative stress by detoxifying peroxides and as sensor of hydrogen peroxide-mediated signaling events. Regulates the activation of NF-kappa-B in the cytosol by a modulation of I-kappa-B-alpha phosphorylation. This chain is Peroxiredoxin-4 (Prdx4), found in Rattus norvegicus (Rat).